A 393-amino-acid chain; its full sequence is Protein FAM53C (393 aa).

Residue Met-1 is modified to N-acetylmethionine. The interval 77–120 (HLRPPSRGNSPKEPPLSQVLSPEPPDPEKLPVPPAPPSKRHCRS) is disordered. Ser-122 and Ser-162 each carry phosphoserine. 2 disordered regions span residues 141-167 (LWTP…PKRV) and 204-283 (QPCA…ARKT). Polar residues predominate over residues 204 to 215 (QPCATSPQSGSW). Residues Ser-232, Ser-234, Ser-255, Ser-273, and Ser-299 each carry the phosphoserine modification. Low complexity predominate over residues 241–256 (ASRFLPSARSSPASSP). Residues 343–355 (SCSPVEGSSQVLS) show a composition bias toward low complexity. The disordered stretch occupies residues 343 to 365 (SCSPVEGSSQVLSESEEEEEGSV).

Belongs to the FAM53 family.

The protein is Protein FAM53C of Mus musculus (Mouse).